The sequence spans 148 residues: Ubiquitin conjugating enzyme E2 B (148 aa).

The 147-residue stretch at 2–148 (AAHKRLQKEI…AKEWTKKYAK (147 aa)) folds into the UBC core domain. Cysteine 87 acts as the Glycyl thioester intermediate in catalysis.

Belongs to the ubiquitin-conjugating enzyme family. Interacts with mkkA (via F-box/WD40 repeat domains).

It catalyses the reaction S-ubiquitinyl-[E1 ubiquitin-activating enzyme]-L-cysteine + [E2 ubiquitin-conjugating enzyme]-L-cysteine = [E1 ubiquitin-activating enzyme]-L-cysteine + S-ubiquitinyl-[E2 ubiquitin-conjugating enzyme]-L-cysteine.. Its pathway is protein modification; protein ubiquitination. Involved in protein ubiquitination and degradation during development. Mediates protein ubiquitination at the mound and finger stage required for subsequent development and may be an essential component of the developmental transition between the induction of postaggregative gene expression and subsequent cell-type differentiation and morphogenesis. ubcB and ubpB differentially control ubiquitination/deubiquitination and degradation of mkkA protein in a cell-type-specific and temporally regulated manner. This chain is Ubiquitin conjugating enzyme E2 B (ubcB), found in Dictyostelium discoideum (Social amoeba).